The following is a 332-amino-acid chain: MMKKPVVIGLAVVVLAAVVAGGYWWYQSRQDNGLTLYGNVDIRTVNLSFRVGGRVESLAVDEGDAIKAGQVLGELDHKPYEIALMQAKAGVSVAQAQYDLMLAGYRDEEIAQAAAAVKQAQAAYDYAQNFYNRQQGLWKSRTISANDLENARSSRDQAQATLKSAQDKLRQYRSGNREQDIAQAKASLEQAQAQLAQAELNLQDSTLIAPSDGTLLTRAVEPGTVLNEGGTVFTVSLTRPVWVRAYVDERNLDQAQPGRKVLLYTDGRPDKPYHGQIGFVSPTAEFTPKTVETPDLRTDLVYRLRIVVTDADDALRQGMPVTVQFGDEAGHE.

Positions methionine 1–alanine 16 are cleaved as a signal peptide. Residues glutamate 108–alanine 209 adopt a coiled-coil conformation.

Belongs to the UPF0194 family.

Its subcellular location is the periplasm. The polypeptide is UPF0194 membrane protein YbhG (Escherichia coli O127:H6 (strain E2348/69 / EPEC)).